Here is a 281-residue protein sequence, read N- to C-terminus: Pantothenate synthetase (281 aa).

31-38 serves as a coordination point for ATP; sequence MGNLHAGH. The active-site Proton donor is H38. Q62 is a (R)-pantoate binding site. Position 62 (Q62) interacts with beta-alanine. 150–153 provides a ligand contact to ATP; it reads GKKD. Q156 lines the (R)-pantoate pocket. ATP contacts are provided by residues V179 and 187-190; that span reads MSSR.

Belongs to the pantothenate synthetase family. In terms of assembly, homodimer.

The protein localises to the cytoplasm. It carries out the reaction (R)-pantoate + beta-alanine + ATP = (R)-pantothenate + AMP + diphosphate + H(+). The protein operates within cofactor biosynthesis; (R)-pantothenate biosynthesis; (R)-pantothenate from (R)-pantoate and beta-alanine: step 1/1. Its function is as follows. Catalyzes the condensation of pantoate with beta-alanine in an ATP-dependent reaction via a pantoyl-adenylate intermediate. This is Pantothenate synthetase from Xylella fastidiosa (strain M23).